An 881-amino-acid chain; its full sequence is MLEFPISVLLGCLVAVKAQTTFPNFESDVLNEHNKFRALHVDTAPLTWSDTLATYAQNYADQYDCSGVLTHSDGPYGENLALGYTDTGAVDAWYGEISKYNYSNPGFSESTGHFTQVVWKSTAEIGCGYKYCGTTWNNYIVCSYNPPGNYLGEFAEEVEPLISTVSSSSSSSSSTSTTSDTVSTISSSIMPAVAQGYTTTVSSAASSSSLKSTTINPAKTATLTASSSTVITSSTESVGSSTVSSASSSSVTTSYATSSSTVVSSDATSSTTTTSSVATSSSTTSSDPTSSTAAASSSDPASSSAAASSSASTENAASSSSAISSSSSMVSAPLSSTLTTSTASSRSVTSNSVNSVKFANTTVFSAQTTSSVSASLSSSVAADDIQGSTSKEATSSVSEHTSIVTSATNAAQYATRLGSSSRSSSGAVSSSAVSQSVLNSVIAVNTDVSVTSVSSTAHTTKDTATTSVTASESITSETAQASSSTEKNISNSAATSSSIYSNSASVSGHGVTYAAEYAITSEQSSALATSVPATNCSSIVKTTTLENSSTTTITAITKSTTTLATTANNSTRAATAVTIDPTLDPTDNSASPTDNAKHTSTYGSSSTGASLDSLRTTTSISVSSNTTQLVSTCTSESDYSDSPSFAISTATTTESNLITNTITASCSTDSNFPTSAASSTDETAFTRTISTSCSTLNGASTQTSELTTSPMKTNTVVPASSFPSTTTTCLENDDTAFSSIYTEVNAATIINPGETSSLASDFATSEKPNEPTSVKSTSNEGTSSTTTTYQQTVATLYAKPSSTSLGARTTTGSNGRSTTSQQDGSAMHQPTSSIYTQLKEGTSTTAKLSAYEGAATPLSIFQCNSLAGTIAAFVVAVLFAF.

The signal sequence occupies residues 1-18 (MLEFPISVLLGCLVAVKA). Residues 30–144 (LNEHNKFRAL…TWNNYIVCSY (115 aa)) form the SCP domain. N-linked (GlcNAc...) asparagine glycosylation is present at asparagine 101. The disordered stretch occupies residues 262 to 313 (VVSSDATSSTTTTSSVATSSSTTSSDPTSSTAAASSSDPASSSAAASSSAST). Asparagine 360 carries N-linked (GlcNAc...) asparagine glycosylation. Disordered stretches follow at residues 381 to 400 (AADD…VSEH) and 453 to 494 (VSST…NSAA). The span at 386–400 (QGSTSKEATSSVSEH) shows a compositional bias: polar residues. 4 N-linked (GlcNAc...) asparagine glycosylation sites follow: asparagine 488, asparagine 535, asparagine 547, and asparagine 569. Residues 579-611 (IDPTLDPTDNSASPTDNAKHTSTYGSSSTGASL) form a disordered region. Residues 585 to 594 (PTDNSASPTD) are compositionally biased toward polar residues. The span at 599 to 611 (TSTYGSSSTGASL) shows a compositional bias: low complexity. N-linked (GlcNAc...) asparagine glycosylation occurs at asparagine 625. Disordered stretches follow at residues 758-788 (LASD…TTTT) and 800-830 (PSST…MHQP). Low complexity-rich tracts occupy residues 776–788 (STSN…TTTT) and 808–820 (RTTT…STTS). Over residues 821–830 (QQDGSAMHQP) the composition is skewed to polar residues. Residue glycine 853 is the site of GPI-anchor amidated glycine attachment. A propeptide spans 854–881 (AATPLSIFQCNSLAGTIAAFVVAVLFAF) (removed in mature form).

The protein belongs to the CRISP family. The GPI-anchor is attached to the protein in the endoplasmic reticulum and serves to target the protein to the cell surface. There, the glucosamine-inositol phospholipid moiety is cleaved off and the GPI-modified mannoprotein is covalently attached via its lipidless GPI glycan remnant to the 1,6-beta-glucan of the outer cell wall layer.

The protein localises to the secreted. The protein resides in the cell wall. It is found in the membrane. In terms of biological role, the full-length isoform (isoform Long) is a daughter cell-specific cell wall protein required for efficient export of lipids such as acetylated sterols. Acts in detoxification of hydrophobic compounds. Involved in tolerance to organic solvents such as dimethyl sulfoxide (DMSO). Also plays a role as an inhibitor of mating. STE12 is utilized as a repressor of full-length PRY3 transcription, ensuring efficient mating. There is no evidence that production of the short PRY3 transcript (isoform Short) is anything more than an adventitious by-product of the mechanism responsible for the repression of the full-length transcript. Moreover, no disadvantage is detectable for cells unable to make the short transcript. The protein is Cell wall protein PRY3 (PRY3) of Saccharomyces cerevisiae (strain ATCC 204508 / S288c) (Baker's yeast).